Here is a 458-residue protein sequence, read N- to C-terminus: UDP-N-acetylmuramoylalanine--D-glutamate ligase (458 aa).

Residue 124-130 (GSDGKTT) participates in ATP binding.

Belongs to the MurCDEF family.

The protein resides in the cytoplasm. It catalyses the reaction UDP-N-acetyl-alpha-D-muramoyl-L-alanine + D-glutamate + ATP = UDP-N-acetyl-alpha-D-muramoyl-L-alanyl-D-glutamate + ADP + phosphate + H(+). It participates in cell wall biogenesis; peptidoglycan biosynthesis. Cell wall formation. Catalyzes the addition of glutamate to the nucleotide precursor UDP-N-acetylmuramoyl-L-alanine (UMA). The polypeptide is UDP-N-acetylmuramoylalanine--D-glutamate ligase (Clostridium beijerinckii (strain ATCC 51743 / NCIMB 8052) (Clostridium acetobutylicum)).